We begin with the raw amino-acid sequence, 120 residues long: NAD(P)H-quinone oxidoreductase subunit 3, chloroplastic (120 aa).

3 consecutive transmembrane segments (helical) span residues 9-29 (IFWA…LISG), 64-84 (MFAL…PWAM), and 88-108 (VLGV…ILGL).

This sequence belongs to the complex I subunit 3 family. In terms of assembly, NDH is composed of at least 16 different subunits, 5 of which are encoded in the nucleus.

Its subcellular location is the plastid. It localises to the chloroplast thylakoid membrane. It carries out the reaction a plastoquinone + NADH + (n+1) H(+)(in) = a plastoquinol + NAD(+) + n H(+)(out). The enzyme catalyses a plastoquinone + NADPH + (n+1) H(+)(in) = a plastoquinol + NADP(+) + n H(+)(out). Its function is as follows. NDH shuttles electrons from NAD(P)H:plastoquinone, via FMN and iron-sulfur (Fe-S) centers, to quinones in the photosynthetic chain and possibly in a chloroplast respiratory chain. The immediate electron acceptor for the enzyme in this species is believed to be plastoquinone. Couples the redox reaction to proton translocation, and thus conserves the redox energy in a proton gradient. The polypeptide is NAD(P)H-quinone oxidoreductase subunit 3, chloroplastic (Aethionema grandiflorum (Persian stone-cress)).